Reading from the N-terminus, the 717-residue chain is Epithelial splicing regulatory protein 2 (717 aa).

Pro residues predominate over residues methionine 1–aspartate 14. The segment at methionine 1–proline 23 is disordered. Serine 83 carries the phosphoserine modification. RRM domains follow at residues threonine 247–serine 343, valine 348–alanine 428, and aspartate 465–threonine 545. Residue serine 563 is modified to Phosphoserine.

The protein belongs to the ESRP family. As to quaternary structure, interacts with RBPMS. In terms of tissue distribution, epithelial cell-specific.

It localises to the nucleus. Functionally, mRNA splicing factor that regulates the formation of epithelial cell-specific isoforms. Specifically regulates the expression of FGFR2-IIIb, an epithelial cell-specific isoform of FGFR2. Also regulates the splicing of CD44, CTNND1, ENAH, 3 transcripts that undergo changes in splicing during the epithelial-to-mesenchymal transition (EMT). Acts by directly binding specific sequences in mRNAs. Binds the GU-rich sequence motifs in the ISE/ISS-3, a cis-element regulatory region present in the mRNA of FGFR2. This chain is Epithelial splicing regulatory protein 2 (Esrp2), found in Mus musculus (Mouse).